Reading from the N-terminus, the 458-residue chain is ATP synthase subunit beta (458 aa).

Position 148-155 (148-155 (GGAGVGKT)) interacts with ATP.

The protein belongs to the ATPase alpha/beta chains family. As to quaternary structure, F-type ATPases have 2 components, CF(1) - the catalytic core - and CF(0) - the membrane proton channel. CF(1) has five subunits: alpha(3), beta(3), gamma(1), delta(1), epsilon(1). CF(0) has three main subunits: a(1), b(2) and c(9-12). The alpha and beta chains form an alternating ring which encloses part of the gamma chain. CF(1) is attached to CF(0) by a central stalk formed by the gamma and epsilon chains, while a peripheral stalk is formed by the delta and b chains.

Its subcellular location is the cell inner membrane. It catalyses the reaction ATP + H2O + 4 H(+)(in) = ADP + phosphate + 5 H(+)(out). In terms of biological role, produces ATP from ADP in the presence of a proton gradient across the membrane. The catalytic sites are hosted primarily by the beta subunits. The protein is ATP synthase subunit beta of Shewanella loihica (strain ATCC BAA-1088 / PV-4).